Reading from the N-terminus, the 33-residue chain is Dermaseptin-H9 (33 aa).

L33 carries the leucine amide modification.

Belongs to the frog skin active peptide (FSAP) family. Dermaseptin subfamily. Expressed by the skin glands.

It localises to the secreted. Has antimicrobial activity. This Pithecopus hypochondrialis (Orange-legged leaf frog) protein is Dermaseptin-H9.